We begin with the raw amino-acid sequence, 317 residues long: MVTLIVATTADPASINPAAALLAMPGWTAGPILPPDIKSFSNKQTRVIQHDRSIVKEDDLDLRWEEATGEVVDEVIFLSRHTAVSNRPALTVHPIGVLHLKDGESPPQGGKPGWAALPSTRIGPWFRLLKKMAEAHGLVPEFEITLEATHHGPITNKPTMFLEIGSTEEYWKRQDAAQVMALLMWEGLGLGGSEEVGKWKSETGKRKVLLGIGGGHYAPRHMDIALKDDIWVGHLLSGYSLPMEDPTQTKTTPGENYIGGNWRQSIKAAFEATKASFPGGEILAHLDHKSFKGWQKKAITEFLAEESINVGKPNDFT.

It belongs to the DtdA deacylase family. The cofactor is Zn(2+). In terms of tissue distribution, ubiquitous.

The protein resides in the nucleus. It is found in the cytoplasm. It catalyses the reaction a D-aminoacyl-tRNA + H2O = a tRNA + a D-alpha-amino acid + H(+). It carries out the reaction glycyl-tRNA(Ala) + H2O = tRNA(Ala) + glycine + H(+). Functionally, hydrolyzes D-aminoacyl-tRNA into D-amino acid and free tRNA. Broad specificity toward the amino acid, but strict specificity toward the D-isomer. Seems to be required for ethanol tolerance. In Arabidopsis thaliana (Mouse-ear cress), this protein is D-aminoacyl-tRNA deacylase (GEK1).